Here is a 337-residue protein sequence, read N- to C-terminus: Adenylosuccinate synthetase (337 aa).

GTP-binding positions include 12 to 18 and 42 to 44; these read GDEGKGK and GHT. Residue aspartate 13 is the Proton acceptor of the active site. Residues aspartate 13 and glycine 42 each coordinate Mg(2+). IMP-binding positions include 13–16, 40–43, threonine 127, arginine 141, glutamine 179, threonine 194, and arginine 256; these read DEGK and NAGH. The active-site Proton donor is histidine 43. Residue 252 to 258 participates in substrate binding; sequence TVTGRRR. GTP-binding positions include arginine 258, 284–286, and 324–326; these read CLD and STG.

It belongs to the adenylosuccinate synthetase family. As to quaternary structure, homodimer. Mg(2+) is required as a cofactor.

It is found in the cytoplasm. The enzyme catalyses IMP + L-aspartate + GTP = N(6)-(1,2-dicarboxyethyl)-AMP + GDP + phosphate + 2 H(+). It functions in the pathway purine metabolism; AMP biosynthesis via de novo pathway; AMP from IMP: step 1/2. Plays an important role in the de novo pathway of purine nucleotide biosynthesis. Catalyzes the first committed step in the biosynthesis of AMP from IMP. In Methanococcus maripaludis (strain C5 / ATCC BAA-1333), this protein is Adenylosuccinate synthetase.